Here is a 208-residue protein sequence, read N- to C-terminus: MAEKIPKPVSKRLVSYYMCLERLLDEGVEVVSSEELARRLDLKASQIRKDLSYFGEFGKRGVGYNVEHLYDAIGEILGVKKEWKLVVVGAGNIGRAVANYTVMKEKGFRIIGIFDSDPSKIGKEAAPGLTVSDVSELEKFVEEHGVEIGVIAVPAEHAQEIAERLEKAGIKGILNFAPVKIKVSVPVENIDITASLRVLTFEIVRRNS.

Residues Ser-15–Phe-54 constitute a DNA-binding region (H-T-H motif). Gly-89–Gly-94 contributes to the NAD(+) binding site.

The protein belongs to the transcriptional regulatory Rex family. As to quaternary structure, homodimer.

It localises to the cytoplasm. In terms of biological role, modulates transcription in response to changes in cellular NADH/NAD(+) redox state. In Thermotoga maritima (strain ATCC 43589 / DSM 3109 / JCM 10099 / NBRC 100826 / MSB8), this protein is Redox-sensing transcriptional repressor Rex 1.